The primary structure comprises 460 residues: Photosystem II CP43 reaction center protein (460 aa).

M1 is a propeptide. Helical transmembrane passes span 56-80, 121-142, 165-187, 242-262, and 278-299; these read LFETSHFIPEKPLYEQGMILLPHLA, IVGPDVLEDSFSFFGYDWRDKN, KALFIGGIYDTWAPGGGDIRFIT, RPFSWARRAFVWSGEAYLSYS, and WYNNTVYPSEFYGPTAAEASQA. E354 contributes to the [CaMn4O5] cluster binding site. A helical membrane pass occupies residues 434 to 458; the sequence is RARAAAAGFEKGINRENEPVLSMRP.

Belongs to the PsbB/PsbC family. PsbC subfamily. As to quaternary structure, PSII is composed of 1 copy each of membrane proteins PsbA, PsbB, PsbC, PsbD, PsbE, PsbF, PsbH, PsbI, PsbJ, PsbK, PsbL, PsbM, PsbT, PsbY, PsbZ, Psb30/Ycf12, at least 3 peripheral proteins of the oxygen-evolving complex and a large number of cofactors. It forms dimeric complexes. Binds multiple chlorophylls and provides some of the ligands for the Ca-4Mn-5O cluster of the oxygen-evolving complex. It may also provide a ligand for a Cl- that is required for oxygen evolution. PSII binds additional chlorophylls, carotenoids and specific lipids. is required as a cofactor.

Its subcellular location is the plastid. The protein resides in the chloroplast thylakoid membrane. Its function is as follows. One of the components of the core complex of photosystem II (PSII). It binds chlorophyll and helps catalyze the primary light-induced photochemical processes of PSII. PSII is a light-driven water:plastoquinone oxidoreductase, using light energy to abstract electrons from H(2)O, generating O(2) and a proton gradient subsequently used for ATP formation. In Cyanidium caldarium (Red alga), this protein is Photosystem II CP43 reaction center protein.